The chain runs to 214 residues: Cell division protein SepF (214 aa).

The segment at 23-70 is disordered; that stretch reads YYDDRAPSRGFPRPRFDDGYGRYDGDDYDDPRREPADYPPPAGYRGGY. Positions 36–58 are enriched in basic and acidic residues; that stretch reads PRFDDGYGRYDGDDYDDPRREPA.

The protein belongs to the SepF family. As to quaternary structure, homodimer. Interacts with FtsZ.

The protein localises to the cytoplasm. Functionally, cell division protein that is part of the divisome complex and is recruited early to the Z-ring. Probably stimulates Z-ring formation, perhaps through the cross-linking of FtsZ protofilaments. Its function overlaps with FtsA. The protein is Cell division protein SepF of Mycobacterium avium (strain 104).